Consider the following 473-residue polypeptide: tRNA-2-methylthio-N(6)-dimethylallyladenosine synthase (473 aa).

Residues 3 to 120 (MKLHVKTWGC…LPEMIKEVQE (118 aa)) enclose the MTTase N-terminal domain. The [4Fe-4S] cluster site is built by C12, C49, C83, C157, C161, and C164. One can recognise a Radical SAM core domain in the interval 143–375 (KADGATAFVS…QDRIQQQSQG (233 aa)). The TRAM domain maps to 378–441 (RKMVGSVQRI…TNSIRGKFIR (64 aa)).

It belongs to the methylthiotransferase family. MiaB subfamily. In terms of assembly, monomer. It depends on [4Fe-4S] cluster as a cofactor.

The protein localises to the cytoplasm. It catalyses the reaction N(6)-dimethylallyladenosine(37) in tRNA + (sulfur carrier)-SH + AH2 + 2 S-adenosyl-L-methionine = 2-methylsulfanyl-N(6)-dimethylallyladenosine(37) in tRNA + (sulfur carrier)-H + 5'-deoxyadenosine + L-methionine + A + S-adenosyl-L-homocysteine + 2 H(+). In terms of biological role, catalyzes the methylthiolation of N6-(dimethylallyl)adenosine (i(6)A), leading to the formation of 2-methylthio-N6-(dimethylallyl)adenosine (ms(2)i(6)A) at position 37 in tRNAs that read codons beginning with uridine. This Psychromonas ingrahamii (strain DSM 17664 / CCUG 51855 / 37) protein is tRNA-2-methylthio-N(6)-dimethylallyladenosine synthase.